Here is a 374-residue protein sequence, read N- to C-terminus: MKYELQKTDGRARRGRLVFERGVVETPAFMPVGTYGTVKGMTPEEVKETGAQILLGNTFHLWLRPGQEIMKLHGDLHDFMQWHGPILTDSGGFQVFSLGAMRKIKEEGVHFKNPINGDSVFLSPEKSMEIQYDLGSDIVMIFDECTPYPADWDYAKRSMEMSLRWAARSRQRFDELNNKNALFGIIQGGVYEDLRDVSVKGLVDIGFDGYAVGGLAVGEPKEDMHRILEHVCPQIPEDKPRYLMGVGKPEDLVEGVRRGIDMFDCVMPTRNARNGHLFVTDGVVKIRNAKHKDDTATLDEHCDCYTCRHYSRAYLHHLDRCNEILGARLNTIHNLRYYQRLMAGLRQAIEEGKLEHFVEDFYGRIGKPVPPLNV.

Catalysis depends on Asp89, which acts as the Proton acceptor. Substrate contacts are provided by residues Asp89 to Phe93, Asp143, Gln187, and Gly214. Residues Gly245 to Asp251 form an RNA binding region. Asp264 functions as the Nucleophile in the catalytic mechanism. The segment at Thr269–Arg273 is RNA binding; important for wobble base 34 recognition. Residues Cys302, Cys304, Cys307, and His333 each contribute to the Zn(2+) site.

Belongs to the queuine tRNA-ribosyltransferase family. Homodimer. Within each dimer, one monomer is responsible for RNA recognition and catalysis, while the other monomer binds to the replacement base PreQ1. Zn(2+) serves as cofactor.

The catalysed reaction is 7-aminomethyl-7-carbaguanine + guanosine(34) in tRNA = 7-aminomethyl-7-carbaguanosine(34) in tRNA + guanine. It functions in the pathway tRNA modification; tRNA-queuosine biosynthesis. Catalyzes the base-exchange of a guanine (G) residue with the queuine precursor 7-aminomethyl-7-deazaguanine (PreQ1) at position 34 (anticodon wobble position) in tRNAs with GU(N) anticodons (tRNA-Asp, -Asn, -His and -Tyr). Catalysis occurs through a double-displacement mechanism. The nucleophile active site attacks the C1' of nucleotide 34 to detach the guanine base from the RNA, forming a covalent enzyme-RNA intermediate. The proton acceptor active site deprotonates the incoming PreQ1, allowing a nucleophilic attack on the C1' of the ribose to form the product. After dissociation, two additional enzymatic reactions on the tRNA convert PreQ1 to queuine (Q), resulting in the hypermodified nucleoside queuosine (7-(((4,5-cis-dihydroxy-2-cyclopenten-1-yl)amino)methyl)-7-deazaguanosine). The sequence is that of Queuine tRNA-ribosyltransferase from Yersinia pseudotuberculosis serotype O:1b (strain IP 31758).